Consider the following 426-residue polypeptide: D-tagatose-1,6-bisphosphate aldolase subunit KbaZ (426 aa).

Belongs to the GatZ/KbaZ family. KbaZ subfamily. In terms of assembly, forms a complex with KbaY.

The protein operates within carbohydrate metabolism; D-tagatose 6-phosphate degradation; D-glyceraldehyde 3-phosphate and glycerone phosphate from D-tagatose 6-phosphate: step 2/2. Component of the tagatose-1,6-bisphosphate aldolase KbaYZ that is required for full activity and stability of the Y subunit. Could have a chaperone-like function for the proper and stable folding of KbaY. When expressed alone, KbaZ does not show any aldolase activity. This chain is D-tagatose-1,6-bisphosphate aldolase subunit KbaZ, found in Escherichia coli (strain ATCC 8739 / DSM 1576 / NBRC 3972 / NCIMB 8545 / WDCM 00012 / Crooks).